The sequence spans 945 residues: MIHSNEPLPYAIEYAKSGRSNCKTCKKNIALDQLRMSMNRPSTFFDGNMDSWFHYNCFWIKMIRGRDDINISSIRGVDWLRWEDQEKLRQEIQHFKTASPPTLTPLCSTTTVILSTIKTEKSLSNRGKCGKCGQNFERGEIKAHNKGKANHFKCFLQEFDKISGTVEDIPGWADYEENFKIKAVGEYVEALAAKRRSTEPATPASASPTPPEAETPVLSAEGSPESSNKRPASSEIIEIDGEGNPDENDFAKKRRMKKEARLMEVQKKRMKKQSDLLWEYRQIFERMPYTDKISILRENEQDIPEGHDPTAQVIERLVDNALFGCPIICQTCSNGKIVYNSSCRTYVCTGYATEYSKCTYESKNPIRTPFEVSHRLTEKHKLQDIVFNQMSERLYIGEEDGESVVKIDKRKSKGGTRGEQFIYAAEAFDSTNNVPIKVGDLTSTNTHIIKKGTVVDAKFALADRCHVFKNEIDGSLYQATLSFTDLTQNKNSYYKIQLLKDDQRENYYVFRSWGRVGTEVGGNKHESYSNSNEAILKFQDVFHEKTKNDWIYRKHFRKMPGMFSYVETDYSEFAQITDTEITPGSKTLLPKSVKEVVMSIFDVENMKSALKSFEMDVNKMPLGRLSHNQINLAFEVLNDISDLLVKLPIDASRILDFSNKFYTIIPHNFGMRVPEPIDSFHKIKEKNNMLNALLDIKFAYDQISGGDVPASTSLGIDPVDINYQKLKCIMEPLQQGCDDWNMIHQYLKNTHGATHDLKVELIDILKLNRDNESSKFKRHIGNRRLLWHGSGKMNFAGILGQGLRIAPPEAPVSGYMFGKGVYFADMFSKSFFYCRANAKEEAYLLLCDVALGNVQQLMASKNVSRQTLPAGFQSVQGLGRQCPREIGSYNHPDGYTIPLGLTYMQLQGKQDVDYHLLYNEFIVYDVDQIQLKYLVRVKMHHARHL.

A PARP-type 1 zinc finger spans residues 10-96 (YAIEYAKSGR…KLRQEIQHFK (87 aa)). Zn(2+)-binding residues include cysteine 22, cysteine 25, histidine 54, and cysteine 57. The segment at 117-183 (IKTEKSLSNR…DYEENFKIKA (67 aa)) adopts a PARP-type 2; degenerate zinc-finger fold. Residues 195-251 (RRSTEPATPASASPTPPEAETPVLSAEGSPESSNKRPASSEIIEIDGEGNPDENDFA) are disordered. Positions 237–248 (IEIDGEGNPDEN) are enriched in acidic residues. The PADR1 zinc-binding domain occupies 258–397 (KEARLMEVQK…NQMSERLYIG (140 aa)). The interval 324–369 (GCPIICQTCSNGKIVYNSSCRTYVCTGYATEYSKCTYESKNPIRTP) is zinc ribbon. Residues cysteine 329, cysteine 332, cysteine 348, and cysteine 358 each contribute to the Zn(2+) site. In terms of domain architecture, WGR spans 464–563 (RCHVFKNEID…KHFRKMPGMF (100 aa)). The PARP alpha-helical domain occupies 586–704 (KTLLPKSVKE…DIKFAYDQIS (119 aa)). The PARP catalytic domain maps to 717–945 (DPVDINYQKL…RVKMHHARHL (229 aa)).

This sequence belongs to the ARTD/PARP family.

The protein localises to the nucleus. It carries out the reaction NAD(+) + (ADP-D-ribosyl)n-acceptor = nicotinamide + (ADP-D-ribosyl)n+1-acceptor + H(+).. The enzyme catalyses L-aspartyl-[protein] + NAD(+) = 4-O-(ADP-D-ribosyl)-L-aspartyl-[protein] + nicotinamide. The catalysed reaction is L-glutamyl-[protein] + NAD(+) = 5-O-(ADP-D-ribosyl)-L-glutamyl-[protein] + nicotinamide. Inhibited by N-(6-oxo-5,6-dihydrophenanthridin-2-yl)-N,N-dimethylacetamide HCl (PJ34), 1,5-dihydroxyisoquinoline (DHQ) and 3-aminobenzamide (3AB). In terms of biological role, poly[ADP-ribose] polymerase modifies various nuclear proteins by poly(ADP-ribosyl)ation, a post-translational modification synthesized after DNA damage that appears as an obligatory step in a detection/signaling pathway leading to the reparation of DNA strand breaks and programmed cell death. Involved in protection of the genome against mutations. This is Poly [ADP-ribose] polymerase 1 from Caenorhabditis elegans.